The sequence spans 440 residues: 2-alpha-hydroxytaxane 2-O-benzoyltransferase (440 aa).

Active-site proton acceptor residues include histidine 158 and aspartate 367.

Belongs to the plant acyltransferase family.

It catalyses the reaction 10-deacetyl-2-debenzoylbaccatin III + benzoyl-CoA = 10-deacetylbaccatin III + CoA. It functions in the pathway alkaloid biosynthesis; taxol biosynthesis; baccatin III from 10-deacetyl-2-debenzoylbaccatin III: step 1/2. In terms of biological role, catalyzes the conversion of 2-debenzoyl-7,13-diacetylbaccatin III, a semisynthetic substrate, to 7,13-diacetylbaccatin III. The polypeptide is 2-alpha-hydroxytaxane 2-O-benzoyltransferase (Taxus cuspidata (Japanese yew)).